Reading from the N-terminus, the 85-residue chain is Coiled-coil-helix-coiled-coil-helix domain-containing protein 7 (85 aa).

Residues 13–55 (INPCLSESDASTRCLDENNYDRERCSTYFLRYKNCRRFWNSIV) enclose the CHCH domain. Short sequence motifs (cx9C motif) lie at residues 16–26 (CLSESDASTRC) and 37–47 (CSTYFLRYKNC). Intrachain disulfides connect Cys16/Cys47 and Cys26/Cys37.

This sequence belongs to the CHCHD7 family. In terms of assembly, monomer.

It localises to the mitochondrion intermembrane space. The sequence is that of Coiled-coil-helix-coiled-coil-helix domain-containing protein 7 (CHCHD7) from Homo sapiens (Human).